The primary structure comprises 238 residues: MDTAQFHTMLEEKGISLSSQALAQFERYYELLMEWNEKMNLTAITDKPSVYLKHFFDSLSPAFYYDFSQSLSICDVGAGAGFPSVPLKICFPHLKLSIVDSLQKRITFLEHLAAELGLTDVAFYHDRAETFGRKKEFRESFDIVTARAVARMSVLSELCLPLVKVNGTFIAMKAASAQEELEQGKKAIDVLGGEISAIERFMLPIEQSERTIIFIQKVRNTPNKYPRKPGMPNKQPIQ.

S-adenosyl-L-methionine is bound by residues glycine 77, phenylalanine 82, 128 to 129 (AE), and arginine 147.

This sequence belongs to the methyltransferase superfamily. RNA methyltransferase RsmG family.

It localises to the cytoplasm. Functionally, specifically methylates the N7 position of guanine in position 535 of 16S rRNA. The chain is Ribosomal RNA small subunit methyltransferase G from Geobacillus sp. (strain WCH70).